A 712-amino-acid chain; its full sequence is Amino-acid acetyltransferase, mitochondrial (712 aa).

A mitochondrion-targeting transit peptide spans 1–47; sequence MFVRTCRSSCNAWTNATSTTQAGSLLPPNAHRSVVLTLSLQACSART. The disordered stretch occupies residues 55 to 99; it reads FASTTSQSKRQEAEAEEKRQVSPRLGPSAPRSSYPSSAEARQKRD. The span at 63-74 shows a compositional bias: basic and acidic residues; that stretch reads KRQEAEAEEKRQ. Over residues 81–93 the composition is skewed to low complexity; that stretch reads PSAPRSSYPSSAE. The N-acetyltransferase domain occupies 534 to 702; that stretch reads GVPRLRLTDT…YEDVCRNIAP (169 aa).

This sequence belongs to the acetyltransferase family.

The protein localises to the mitochondrion. It carries out the reaction L-glutamate + acetyl-CoA = N-acetyl-L-glutamate + CoA + H(+). The protein operates within amino-acid biosynthesis; L-arginine biosynthesis; N(2)-acetyl-L-ornithine from L-glutamate: step 1/4. With respect to regulation, inhibited by arginine. Functionally, N-acetylglutamate synthase involved in arginine biosynthesis. This is Amino-acid acetyltransferase, mitochondrial (arg-14) from Neurospora crassa (strain ATCC 24698 / 74-OR23-1A / CBS 708.71 / DSM 1257 / FGSC 987).